The following is a 483-amino-acid chain: Cysteine proteinase 1, mitochondrial (483 aa).

The N-terminal 30 residues, Met-1–Met-30, are a transit peptide targeting the mitochondrion. Catalysis depends on residues Cys-102, His-398, and Asn-421. Residue Lys-483 is a propeptide, removed in mature form; by autocatalysis.

Belongs to the peptidase C1 family. In terms of assembly, homohexamer. Binds to nucleic acids. Binds single-stranded DNA and RNA with higher affinity than double-stranded DNA. The N-terminus of isoform Cytoplasmic is blocked.

The protein localises to the mitochondrion. Its subcellular location is the cytoplasm. The enzyme catalyses Inactivates bleomycin B2 (a cytotoxic glycometallopeptide) by hydrolysis of a carboxyamide bond of beta-aminoalanine, but also shows general aminopeptidase activity. The specificity varies somewhat with source, but amino acid arylamides of Met, Leu and Ala are preferred.. With respect to regulation, inhibited by E64, a specific inhibitor of cysteine proteases, N-ethylmaleimide, iodacetamide, and mercury and zinc ions. In terms of biological role, the normal physiological role of the enzyme is unknown, but it is not essential for the viability of yeast cells. Has aminopeptidase activity, shortening substrate peptides sequentially by 1 amino acid. Has bleomycin hydrolase activity, which can protect the cell from the toxic effects of bleomycin. Has homocysteine-thiolactonase activity, protecting the cell against homocysteine toxicity. Acts as a repressor in the GAL4 regulatory system, but this does not require either the peptidase or nucleic acid-binding activities. This chain is Cysteine proteinase 1, mitochondrial (LAP3), found in Saccharomyces cerevisiae (strain JAY291) (Baker's yeast).